The primary structure comprises 375 residues: Sulfite efflux pump SSU1 (375 aa).

The Cytoplasmic segment spans residues 1–25 (MPSGSGFQNIEEAGEKARRRDDWIA). The helical transmembrane segment at 26-46 (ISNFHPGWFSVNMGTGITAIL) threads the bilayer. The Extracellular portion of the chain corresponds to 47 to 59 (LQNLPYQFPGLHY). Residues 60 to 80 (IAVVLFVLNVIIFFFFLTISI) form a helical membrane-spanning segment. At 81 to 101 (TRYALWPEKFKAMLAHPAHSM) the chain is on the cytoplasmic side. Residues 102 to 122 (LLGTFPMGFATIINCIIFICV) form a helical membrane-spanning segment. The Extracellular segment spans residues 123-135 (PVWGDWAARFAWG). The helical transmembrane segment at 136-156 (LWWVDATVSIAICYFVPFMLM) threads the bilayer. The Cytoplasmic portion of the chain corresponds to 157–167 (TKHTSSLETMT). A helical membrane pass occupies residues 168 to 188 (AAWLLPIVAPVVAAASGGVVA). Residues 189-200 (DALKNDTHALIT) are Extracellular-facing. N-linked (GlcNAc...) asparagine glycosylation is present at asparagine 193. Residues 201-221 (ILVCYVMWGSAVPLAMVILVI) traverse the membrane as a helical segment. Topologically, residues 222–234 (YFQRLALHKLVPR) are cytoplasmic. A helical transmembrane segment spans residues 235–255 (AAIVSALLPIGPLGQGGFGLM). The Extracellular segment spans residues 256–277 (QLGVVARRVFPRLDFLAPIAGE). The chain crosses the membrane as a helical span at residues 278–298 (IFYVMGAFIAMIMWGFGLIWL). The Cytoplasmic segment spans residues 299–309 (WFALASFTRGK). The chain crosses the membrane as a helical span at residues 310-330 (FYFNIGWWAFTFPLGVFTTAT). Residues 331–343 (TQMGKEFNSVVFD) are Extracellular-facing. A helical membrane pass occupies residues 344–364 (VLGTFFSIVVAAMWVMVFALT). The Cytoplasmic portion of the chain corresponds to 365-375 (VYKSCTKELFK).

It belongs to the tellurite-resistance/dicarboxylate transporter (TDT) family.

It localises to the cell membrane. Its function is as follows. Sulphite efflux pump required for the secretion of sulphite as a reducing agent. In the presence of sulphite, cystine in keratin is directly cleaved to cysteine and S-sulphocysteine, and thereby, reduced proteins become accessible to hydrolysis by a variety of secreted endo- and exoproteases. Excretion of sulphite mediated by an efflux pump also represents a detoxification pathway for dermatophytes during infection of the epidermal stratum corneum, hair and nails, which are rich in cysteine. This Arthroderma otae (strain ATCC MYA-4605 / CBS 113480) (Microsporum canis) protein is Sulfite efflux pump SSU1 (SSU1).